We begin with the raw amino-acid sequence, 780 residues long: ATP-dependent 6-phosphofructokinase, liver type (780 aa).

Alanine 2 bears the N-acetylalanine mark. An N-terminal catalytic PFK domain 1 region spans residues alanine 2–histidine 390. ATP contacts are provided by residues glycine 25, arginine 88 to cysteine 89, and glycine 118 to serine 121. Aspartate 119 is a Mg(2+) binding site. Substrate-binding positions include serine 164–aspartate 166, arginine 201, methionine 208–arginine 210, glutamate 264, arginine 292, and histidine 298–arginine 301. Aspartate 166 acts as the Proton acceptor in catalysis. Serine 377 bears the Phosphoserine mark. The segment at glutamine 391–phenylalanine 400 is interdomain linker. Positions serine 401–phenylalanine 780 are C-terminal regulatory PFK domain 2. Beta-D-fructose 2,6-bisphosphate is bound by residues arginine 470, threonine 527–asparagine 531, arginine 565, methionine 572–glycine 574, and glutamate 628. Serine 529 carries O-linked (GlcNAc) serine glycosylation. Tyrosine 640 is modified (phosphotyrosine). Residues arginine 654, histidine 660–glutamine 663, and arginine 734 contribute to the beta-D-fructose 2,6-bisphosphate site. Serine 775 carries the post-translational modification Phosphoserine.

This sequence belongs to the phosphofructokinase type A (PFKA) family. ATP-dependent PFK group I subfamily. Eukaryotic two domain clade 'E' sub-subfamily. In terms of assembly, homo- and heterotetramers. Phosphofructokinase (PFK) enzyme functions as a tetramer composed of different combinations of 3 types of subunits, called PFKM (where M stands for Muscle), PFKL (Liver) and PFKP (Platelet). The composition of the PFK tetramer differs according to the tissue type it is present in. In muscles, it is composed of 4 PFKM subunits (also called M4). In the liver, the predominant form is a tetramer of PFKL subunits (L4). In erythrocytes, both PFKM and PFKL subunits randomly tetramerize to form M4, L4 and other combinations (ML3, M2L2, M3L). The kinetic and regulatory properties of the tetrameric enzyme are dependent on the subunit composition, hence can vary across tissues. The cofactor is Mg(2+). In terms of processing, glcNAcylation at Ser-529 by OGT decreases enzyme activity, leading to redirect glucose flux through the oxidative pentose phosphate pathway. Glycosylation is stimulated by both hypoxia and glucose deprivation.

Its subcellular location is the cytoplasm. The catalysed reaction is beta-D-fructose 6-phosphate + ATP = beta-D-fructose 1,6-bisphosphate + ADP + H(+). It functions in the pathway carbohydrate degradation; glycolysis; D-glyceraldehyde 3-phosphate and glycerone phosphate from D-glucose: step 3/4. Its activity is regulated as follows. Allosterically activated by ADP, AMP, or fructose 2,6-bisphosphate, and allosterically inhibited by ATP or citrate. GlcNAcylation by OGT overcomes allosteric regulation. In terms of biological role, catalyzes the phosphorylation of D-fructose 6-phosphate to fructose 1,6-bisphosphate by ATP, the first committing step of glycolysis. Negatively regulates the phagocyte oxidative burst in response to bacterial infection by controlling cellular NADPH biosynthesis and NADPH oxidase-derived reactive oxygen species. Upon macrophage activation, drives the metabolic switch toward glycolysis, thus preventing glucose turnover that produces NADPH via pentose phosphate pathway. The chain is ATP-dependent 6-phosphofructokinase, liver type from Homo sapiens (Human).